The sequence spans 166 residues: Phospholipase A2 myotoxin inhibitor protein (166 aa).

An N-terminal signal peptide occupies residues 1–19; that stretch reads MRLILLSGLLLLGTFLANG. The C-type lectin domain occupies 46-161; the sequence is LKYAFLTVHK…CDDNLLVVCE (116 aa). Disulfide bonds link C83-C160 and C138-C152. An N-linked (GlcNAc...) asparagine glycan is attached at N122.

It belongs to the alpha-type phospholipase A2 inhibitor family. Oligomer. Homotrimer; non-covalently linked. Glycosylated. The glycosylation has no role in the association of this PLI and PA2 enzyme. As to expression, expressed by the liver.

It localises to the secreted. This phospholipase A2 inhibitor binds directly phospholipase A2 in the presence or absence of calcium. Has anti-enzymatic, anti-myotoxic, anti-edema inducing, anti-cytotoxic, anti-bactericidal, and anti-lethal properties against basic and acidic phospholipases A2 from Bothrops venoms. The protein is Phospholipase A2 myotoxin inhibitor protein of Bothrops moojeni (Lance-headed viper).